The chain runs to 289 residues: Energy-coupling factor transporter ATP-binding protein EcfA2 (289 aa).

The region spanning 3 to 246 (IEIKDVEHRY…KDDIAALGLD (244 aa)) is the ABC transporter domain. 40–47 (GHTGSGKS) contributes to the ATP binding site.

It belongs to the ABC transporter superfamily. Energy-coupling factor EcfA family. Forms a stable energy-coupling factor (ECF) transporter complex composed of 2 membrane-embedded substrate-binding proteins (S component), 2 ATP-binding proteins (A component) and 2 transmembrane proteins (T component).

The protein localises to the cell membrane. Functionally, ATP-binding (A) component of a common energy-coupling factor (ECF) ABC-transporter complex. Unlike classic ABC transporters this ECF transporter provides the energy necessary to transport a number of different substrates. The protein is Energy-coupling factor transporter ATP-binding protein EcfA2 of Bacillus licheniformis (strain ATCC 14580 / DSM 13 / JCM 2505 / CCUG 7422 / NBRC 12200 / NCIMB 9375 / NCTC 10341 / NRRL NRS-1264 / Gibson 46).